The following is a 125-amino-acid chain: Ribosome-binding factor A (125 aa).

It belongs to the RbfA family. As to quaternary structure, monomer. Binds 30S ribosomal subunits, but not 50S ribosomal subunits or 70S ribosomes.

It is found in the cytoplasm. Its function is as follows. One of several proteins that assist in the late maturation steps of the functional core of the 30S ribosomal subunit. Associates with free 30S ribosomal subunits (but not with 30S subunits that are part of 70S ribosomes or polysomes). Required for efficient processing of 16S rRNA. May interact with the 5'-terminal helix region of 16S rRNA. The protein is Ribosome-binding factor A of Desulfitobacterium hafniense (strain DSM 10664 / DCB-2).